The primary structure comprises 1986 residues: MKTPENLEEPSATPNPSRTPTERFVYLEALLEGGAPWGFTLKGGLERGEPLIISKIEEGGKADSVSSGLQAGDEVIHINEVALSSPRREAVSLVKGSYKTLRLVVRRDVCAAPGHADPGTSKSLSSELLTCSPQHRKATWSGGVKLRLKQRCSEPATRPHSWHTTKFGETQPDVSMMQISQGTMGPPWHQSYHSSSSTSDLSNYDHAYLRRSPDQCSSQGSMESLEPSGGYPPCHLLSPAKSTSSIDQLGHLHNKRDSAYSSFSTSSSIFEYPPPGGSARERSGSMDVISARGGLLEGMRQADIRYVKTVYDTRRGVSSEYEVNPSALLLQGRDAHASADSQGCAKWHSIPRGKGTPSPSWSQQCSGSLETATDNLPQKAGAPLPPTRSDSYAAFRHRERPSSWSSLDQKRFCRPQTNSSGSQKTPFAEDQLHTVPERSPENSPPVKSKHNYTQKAQPGQPLLPTGIYPVPSPEPHFAQVPQPSVSSNGTVYPALVKESGYTAAQGTCNKMATLDENGNQNEASRPGFAFCQPLEHNSVTPVEKRPEPTAKYIYKVHFSSVPENEDSSLKRHITPPHGHSPYPSERKNIHGGSRACSNHHSLSSPQAQALHVGDDRRPSRLSQPWEGDFQEDHNANLRQKVEREGQGQGLSGNSGRTRSAFSSLQNIPESLRRQSNVELGEAQEVHPGGRSKVEDPGRKAGASDIRGYLDRSVSYPRPEGKMNAVDSVHSADSRYEESPAPALPQTSGASQRRLSSSSSAAPQYRKPHCSVLEKVSRIEEREQGRHRPLSVGSSAYGPGYRPGRTGPTPSTSSSDLDDPKAGSVHFSESTEHLRNGEQNPPNGEAKQEEASRPQCSHLIRRAPADGRGPPARGGEPSRPEARLLRSQSTFQLYSEAEREASWSEDRPGTPESPLLDAPFSRAYRNSIKDAQSRVLGATSFRRRDLEPGTPATSRPWRPRPASAHVGMRSPEAAVPSSSPHTPRERHSVTPAAPQAARRGPRRRLTVEQKKRSYSEPEKMNEVGVSEEAEPTPCGPPRPAQPRFSESTVADRRRIFERDGKACSTLSLSGPELKQFQQSALADYIQRKTGKRPTGAACTPEAGLRERAQSAYLQAGPAAPDGPGLASACSLSSLREPEALPRKEHTHPSAADGPQAPRDRSSSFASGRLVGERRRWDPQVPRQLLSGANCEPRGVQRMDGAPGGPPSWGMVAGKAGKSKSAEDLLERSDTLAVPVHVRSRSSPTSDKKGQDVLLREGSNFGFVKDPCCLAGPGPRSLSCSDKGQNELALPLHHPTPCWNGSGCKATVASSAPPESSGAADHLKQRRAPGPRPLSAGMHGHFPDARAASLSSPLPSPVPSASPVPSSYRSQLAMDQQTGQQPPSSPASAVTQPTSPRSPELSSPAYGLGEGMWKRTSLPQRPPPPWVKWAHAVREDGLAEDTLAPEFANLKHYRNQPSRPSSCSTSDPDTPGRISLRISESALQPSPPPRGDYDDEVFMKDLHPKVTSSPTFEALPPPPPPSPPSEEPLVNGTDDFPPPPPPQALCEVLLDGEASTEAGSGPCRIPRVMVTREGHVPGAAHSEGSQIMTATPPQTSAKGSEAESNTPSSASAQPQLNGSPGKQLCPSQTRNLTYEPVERTQDLGKKTHAEPQKTSEDIRTEALAKEIVHQDKSLADILDPDSRMKTTMDLMEGLFPGDASVLMDSGAKRKALDITARRAGCEAKASDHKEAVSVLVNCPAYYSVSAAKAELLNKIKDMPEELQEEEGQEDVNEKKAELIGSLTHKLESLQEAKGSLLTDIKLNNALGEEVEALISELCKPNEFDKYKMFIGDLDKVVNLLLSLSGRLARVENVLRGLGEDASKEERSSLNEKRKVLAGQHEDARELKENLDRRERVVLDILANYLSAEQLQDYQHFVKMKSTLLIEQRKLDDKIKLGQEQVRCLLESLPSDFRPKAGAISLPPALTGHATPGGTSVFGGVFPTLTSPL.

A disordered region spans residues 1–21 (MKTPENLEEPSATPNPSRTPT). Residues 24-109 (FVYLEALLEG…TLRLVVRRDV (86 aa)) enclose the PDZ domain. 5 disordered regions span residues 152 to 199 (CSEP…SSTS), 211 to 239 (RSPD…LLSP), 265 to 285 (TSSS…RSGS), 342 to 463 (QGCA…QPLL), and 564 to 1055 (NEDS…RRIF). At S212 the chain carries Phosphoserine. Polar residues-rich tracts occupy residues 357–376 (PSPS…TDNL) and 415–425 (PQTNSSGSQKT). The span at 430 to 440 (DQLHTVPERSP) shows a compositional bias: basic and acidic residues. Residues S439 and S443 each carry the phosphoserine modification. Over residues 595-607 (ACSNHHSLSSPQA) the composition is skewed to polar residues. Positions 630–645 (QEDHNANLRQKVEREG) are enriched in basic and acidic residues. Positions 653 to 677 (NSGRTRSAFSSLQNIPESLRRQSNV) are enriched in polar residues. Positions 747-761 (SGASQRRLSSSSSAA) are enriched in low complexity. Positions 774-785 (KVSRIEEREQGR) are enriched in basic and acidic residues. Low complexity-rich tracts occupy residues 796 to 814 (YGPG…TSSS) and 865 to 874 (DGRGPPARGG). A Phosphoserine modification is found at S888. Over residues 895-908 (EAEREASWSEDRPG) the composition is skewed to basic and acidic residues. T909 bears the Phosphothreonine mark. 2 positions are modified to phosphoserine: S912 and S969. The ASD1 domain maps to 927 to 1023 (IKDAQSRVLG…SEPEKMNEVG (97 aa)). Positions 1004 to 1020 (LTVEQKKRSYSEPEKMN) are enriched in basic and acidic residues. Residues S1063 and S1066 each carry the phosphoserine modification. Disordered stretches follow at residues 1083-1102 (YIQR…PEAG), 1107-1223 (AQSA…AEDL), 1304-1425 (ATVA…PPWV), and 1446-1654 (ANLK…KTSE). The segment covering 1114 to 1127 (AGPAAPDGPGLASA) has biased composition (low complexity). Residues 1134 to 1146 (REPEALPRKEHTH) show a composition bias toward basic and acidic residues. Residues W1175, V1179, and S1219 each carry the phosphoserine modification. The span at 1307 to 1318 (ASSAPPESSGAA) shows a compositional bias: low complexity. 2 positions are modified to phosphoserine: S1350 and S1354. The segment covering 1366–1399 (YRSQLAMDQQTGQQPPSSPASAVTQPTSPRSPEL) has biased composition (polar residues). A compositionally biased stretch (low complexity) spans 1455 to 1469 (PSRPSSCSTSDPDTP). Residues 1513–1524 (LPPPPPPSPPSE) are compositionally biased toward pro residues. Positions 1581-1630 (EGSQIMTATPPQTSAKGSEAESNTPSSASAQPQLNGSPGKQLCPSQTRNL) are enriched in polar residues. The span at 1634–1654 (PVERTQDLGKKTHAEPQKTSE) shows a compositional bias: basic and acidic residues. One can recognise an ASD2 domain in the interval 1659-1947 (EALAKEIVHQ…QVRCLLESLP (289 aa)). A coiled-coil region spans residues 1844–1890 (RLARVENVLRGLGEDASKEERSSLNEKRKVLAGQHEDARELKENLDR).

Belongs to the shroom family. Interacts with F-actin. Interacts with ROCK1.

The protein resides in the cell junction. It localises to the adherens junction. It is found in the cytoplasm. Its subcellular location is the cytoskeleton. The protein localises to the apical cell membrane. Its function is as follows. Controls cell shape changes in the neuroepithelium during neural tube closure. Induces apical constriction in epithelial cells by promoting the apical accumulation of F-actin and myosin II, and probably by bundling stress fibers. Induces apicobasal cell elongation by redistributing gamma-tubulin and directing the assembly of robust apicobasal microtubule arrays. The chain is Protein Shroom3 (Shroom3) from Mus musculus (Mouse).